The primary structure comprises 341 residues: Holliday junction branch migration complex subunit RuvB (341 aa).

Positions 4–185 (TDRLIVPTAV…FGIVARLEFY (182 aa)) are large ATPase domain (RuvB-L). ATP is bound by residues Leu24, Arg25, Gly66, Lys69, Thr70, Thr71, 132 to 134 (EDF), Arg175, Tyr185, and Arg222. A Mg(2+)-binding site is contributed by Thr70. The segment at 186–256 (SAEELGYIVH…VADAALVMLD (71 aa)) is small ATPAse domain (RuvB-S). Residues 259-341 (RAGLDVMDRK…ATPASDAELF (83 aa)) form a head domain (RuvB-H) region. DNA contacts are provided by Arg295, Arg314, and Arg319.

This sequence belongs to the RuvB family. Homohexamer. Forms an RuvA(8)-RuvB(12)-Holliday junction (HJ) complex. HJ DNA is sandwiched between 2 RuvA tetramers; dsDNA enters through RuvA and exits via RuvB. An RuvB hexamer assembles on each DNA strand where it exits the tetramer. Each RuvB hexamer is contacted by two RuvA subunits (via domain III) on 2 adjacent RuvB subunits; this complex drives branch migration. In the full resolvosome a probable DNA-RuvA(4)-RuvB(12)-RuvC(2) complex forms which resolves the HJ.

The protein localises to the cytoplasm. The enzyme catalyses ATP + H2O = ADP + phosphate + H(+). The RuvA-RuvB-RuvC complex processes Holliday junction (HJ) DNA during genetic recombination and DNA repair, while the RuvA-RuvB complex plays an important role in the rescue of blocked DNA replication forks via replication fork reversal (RFR). RuvA specifically binds to HJ cruciform DNA, conferring on it an open structure. The RuvB hexamer acts as an ATP-dependent pump, pulling dsDNA into and through the RuvAB complex. RuvB forms 2 homohexamers on either side of HJ DNA bound by 1 or 2 RuvA tetramers; 4 subunits per hexamer contact DNA at a time. Coordinated motions by a converter formed by DNA-disengaged RuvB subunits stimulates ATP hydrolysis and nucleotide exchange. Immobilization of the converter enables RuvB to convert the ATP-contained energy into a lever motion, pulling 2 nucleotides of DNA out of the RuvA tetramer per ATP hydrolyzed, thus driving DNA branch migration. The RuvB motors rotate together with the DNA substrate, which together with the progressing nucleotide cycle form the mechanistic basis for DNA recombination by continuous HJ branch migration. Branch migration allows RuvC to scan DNA until it finds its consensus sequence, where it cleaves and resolves cruciform DNA. This Thiobacillus denitrificans (strain ATCC 25259 / T1) protein is Holliday junction branch migration complex subunit RuvB.